The following is a 473-amino-acid chain: Vasculin (473 aa).

Disordered stretches follow at residues Met1 to Asn25, Arg46 to Asn149, and Val191 to Asp342. Ser49 carries the post-translational modification Phosphoserine. At Arg87 the chain carries Omega-N-methylarginine. Residues Glu119 to Glu133 are compositionally biased toward basic and acidic residues. Polar residues-rich tracts occupy residues Leu194 to Gly204 and Ala251 to Arg286. 4 positions are modified to phosphoserine: Ser274, Ser276, Ser322, and Ser381. Residues Met293 to Phe329 show a composition bias toward basic and acidic residues. The segment at Gly444–Val473 is disordered. Residues Glu456–Val473 show a composition bias toward acidic residues.

Belongs to the vasculin family. As to quaternary structure, interacts with GTF2B, GTF2F2, RNA polymerase II and TBP. In terms of tissue distribution, widely expressed. Some isoforms may be specifically expressed in veins and arteries (at protein level). Isoform 4 is widely expressed. Isoform 1, isoform 2 and isoform 3 may be specifically expressed in vascular smooth muscle cells.

Its subcellular location is the nucleus. The protein localises to the cytoplasm. Functionally, functions as a GC-rich promoter-specific transactivating transcription factor. In Homo sapiens (Human), this protein is Vasculin (GPBP1).